A 305-amino-acid polypeptide reads, in one-letter code: tRNA pseudouridine synthase B (305 aa).

Catalysis depends on Asp-48, which acts as the Nucleophile.

This sequence belongs to the pseudouridine synthase TruB family. Type 1 subfamily.

The enzyme catalyses uridine(55) in tRNA = pseudouridine(55) in tRNA. Responsible for synthesis of pseudouridine from uracil-55 in the psi GC loop of transfer RNAs. This is tRNA pseudouridine synthase B from Mannheimia succiniciproducens (strain KCTC 0769BP / MBEL55E).